A 620-amino-acid polypeptide reads, in one-letter code: bZIP transcription factor 49 (620 aa).

The Cytoplasmic segment spans residues 1 to 287 (MAEPVLEDTY…VAKVKKFKKV (287 aa)). A compositionally biased stretch (polar residues) spans 109–135 (SSCYNRESPTDSDFSGTSQSLSFSGQD). The disordered stretch occupies residues 109-155 (SSCYNRESPTDSDFSGTSQSLSFSGQDSAKRKTEIEEDSSDESRRLG). A bZIP domain is found at 172 to 235 (EKKKNVRLVR…VTLRQQMGTR (64 aa)). Residues 173 to 205 (KKKNVRLVRNRESAHLSRQRKKHYVEELEDKVK) form a basic motif region. Positions 211–218 (ISELSSKM) are leucine-zipper. A helical membrane pass occupies residues 288-308 (ASFSVFGFLFCMFLFGALVNI). The Lumenal portion of the chain corresponds to 309–620 (SYGEYKSNYV…RPDVPHLMTS (312 aa)). 3 disordered regions span residues 343–364 (DSDQ…PRNS), 398–460 (ARDS…SNDQ), and 505–557 (PASP…RETK). 2 N-linked (GlcNAc...) asparagine glycosylation sites follow: Asn-351 and Asn-363. Residues 352 to 364 (VSETENLGPPRNS) are compositionally biased toward polar residues. 2 stretches are compositionally biased toward basic and acidic residues: residues 398–409 (ARDSETKNEEGK) and 432–441 (RTRDVSKHLY). 2 stretches are compositionally biased toward polar residues: residues 447 to 460 (GLSS…SNDQ) and 508 to 519 (PHTQQCKNTSDT). Residue Asn-515 is glycosylated (N-linked (GlcNAc...) asparagine). Residues 526 to 529 (RRIL) carry the RRIL cleavage motif motif. Asn-539 and Asn-546 each carry an N-linked (GlcNAc...) asparagine glycan. Positions 540-557 (LTKEDHNSSSKDKFRETK) are enriched in basic and acidic residues.

Belongs to the bZIP family. In terms of assembly, interacts with BZIP28.

The protein localises to the endoplasmic reticulum membrane. Its subcellular location is the nucleus. Transcriptional activator involved in stress responses. This chain is bZIP transcription factor 49, found in Arabidopsis thaliana (Mouse-ear cress).